The chain runs to 349 residues: ATP phosphoribosyltransferase regulatory subunit (349 aa).

Residues 327–349 are disordered; the sequence is GRGRGVRPRRASARGGRARARPR. Over residues 330–349 the composition is skewed to basic residues; the sequence is RGVRPRRASARGGRARARPR.

This sequence belongs to the class-II aminoacyl-tRNA synthetase family. HisZ subfamily. As to quaternary structure, heteromultimer composed of HisG and HisZ subunits.

It localises to the cytoplasm. It participates in amino-acid biosynthesis; L-histidine biosynthesis; L-histidine from 5-phospho-alpha-D-ribose 1-diphosphate: step 1/9. In terms of biological role, required for the first step of histidine biosynthesis. May allow the feedback regulation of ATP phosphoribosyltransferase activity by histidine. This chain is ATP phosphoribosyltransferase regulatory subunit, found in Anaeromyxobacter dehalogenans (strain 2CP-1 / ATCC BAA-258).